Reading from the N-terminus, the 214-residue chain is MSVFISFEGVDGSGKSTQIRLLLQYLDEQSVPYVFTREPGGTPIAEQIRRVLLDPANRGMSVITEALLFAAARAEHVSRTIRPALEEGKVVICDRFVDSSLVYQGVAGGLPVEFLTQINEMATGALRPHRTIVLDLAPEVALARRTGEEADRIERQSREYHQLVREGYLDLARAEPRRVKVVDASRSVEEVQKDIRRLVEEVLPRRFRGAGTRP.

Glycine 9–serine 16 provides a ligand contact to ATP.

It belongs to the thymidylate kinase family.

The enzyme catalyses dTMP + ATP = dTDP + ADP. In terms of biological role, phosphorylation of dTMP to form dTDP in both de novo and salvage pathways of dTTP synthesis. The protein is Thymidylate kinase of Symbiobacterium thermophilum (strain DSM 24528 / JCM 14929 / IAM 14863 / T).